The chain runs to 254 residues: rRNA N-glycosylase sapovaccarin-S1 (254 aa).

Belongs to the ribosome-inactivating protein family. Type 1 RIP subfamily. As to expression, expressed in seeds; most abundant in the perisperm.

It catalyses the reaction Endohydrolysis of the N-glycosidic bond at one specific adenosine on the 28S rRNA.. Exhibits N-glycosylase activity. Catalyzes the release of one adenine from a ribosome. Acts as a ribosome-inactivating protein and inhibits protein synthesis in a rabbit-reticulocyte lysate system and in various cell lines (in vitro). Induces cell death in Huh-7 liver cells. May contribute to the protection against plant pests and predators or play a role in regulating the death of plant cells. In Gypsophila vaccaria (Cow soapwort), this protein is rRNA N-glycosylase sapovaccarin-S1.